The chain runs to 207 residues: Dephospho-CoA kinase (207 aa).

Residues 1–11 (MTRSPAPSSPT) are compositionally biased toward polar residues. Residues 1-21 (MTRSPAPSSPTHPRRLGLTGS) form a disordered region. The region spanning 15–207 (RLGLTGSIGA…DAALRQLEIT (193 aa)) is the DPCK domain. 23–28 (GAGKST) is a binding site for ATP.

Belongs to the CoaE family.

Its subcellular location is the cytoplasm. The catalysed reaction is 3'-dephospho-CoA + ATP = ADP + CoA + H(+). Its pathway is cofactor biosynthesis; coenzyme A biosynthesis; CoA from (R)-pantothenate: step 5/5. Functionally, catalyzes the phosphorylation of the 3'-hydroxyl group of dephosphocoenzyme A to form coenzyme A. This Deinococcus radiodurans (strain ATCC 13939 / DSM 20539 / JCM 16871 / CCUG 27074 / LMG 4051 / NBRC 15346 / NCIMB 9279 / VKM B-1422 / R1) protein is Dephospho-CoA kinase.